The sequence spans 133 residues: Small ribosomal subunit protein eS24 (133 aa).

M1 carries the N-acetylmethionine modification. Phosphothreonine is present on T9. Residue K37 forms a Glycyl lysine isopeptide (Lys-Gly) (interchain with G-Cter in SUMO2) linkage. Residues A92–E133 are disordered. Residues K101–G119 are compositionally biased toward basic residues.

Belongs to the eukaryotic ribosomal protein eS24 family. As to quaternary structure, component of the small ribosomal subunit. Part of the small subunit (SSU) processome, composed of more than 70 proteins and the RNA chaperone small nucleolar RNA (snoRNA) U3.

It is found in the cytoplasm. The protein resides in the nucleus. It localises to the nucleolus. In terms of biological role, component of the small ribosomal subunit. The ribosome is a large ribonucleoprotein complex responsible for the synthesis of proteins in the cell. Required for processing of pre-rRNA and maturation of 40S ribosomal subunits. Part of the small subunit (SSU) processome, first precursor of the small eukaryotic ribosomal subunit. During the assembly of the SSU processome in the nucleolus, many ribosome biogenesis factors, an RNA chaperone and ribosomal proteins associate with the nascent pre-rRNA and work in concert to generate RNA folding, modifications, rearrangements and cleavage as well as targeted degradation of pre-ribosomal RNA by the RNA exosome. This Oryctolagus cuniculus (Rabbit) protein is Small ribosomal subunit protein eS24 (RPS24).